The following is a 115-amino-acid chain: Large ribosomal subunit protein bL19 (115 aa).

It belongs to the bacterial ribosomal protein bL19 family.

Functionally, this protein is located at the 30S-50S ribosomal subunit interface and may play a role in the structure and function of the aminoacyl-tRNA binding site. This is Large ribosomal subunit protein bL19 from Desulfovibrio desulfuricans (strain ATCC 27774 / DSM 6949 / MB).